The sequence spans 183 residues: Peptidyl-tRNA hydrolase (183 aa).

Residue Tyr-14 coordinates tRNA. Residue His-19 is the Proton acceptor of the active site. TRNA-binding residues include Tyr-64, Asn-66, and Asn-112.

This sequence belongs to the PTH family. As to quaternary structure, monomer.

Its subcellular location is the cytoplasm. The enzyme catalyses an N-acyl-L-alpha-aminoacyl-tRNA + H2O = an N-acyl-L-amino acid + a tRNA + H(+). In terms of biological role, hydrolyzes ribosome-free peptidyl-tRNAs (with 1 or more amino acids incorporated), which drop off the ribosome during protein synthesis, or as a result of ribosome stalling. Catalyzes the release of premature peptidyl moieties from peptidyl-tRNA molecules trapped in stalled 50S ribosomal subunits, and thus maintains levels of free tRNAs and 50S ribosomes. The chain is Peptidyl-tRNA hydrolase from Anaplasma phagocytophilum (strain HZ).